The following is a 145-amino-acid chain: Basic phospholipase A2 S6-45 (145 aa).

A signal peptide spans 1-19; it reads MYPAHLLVLLAVCVSLLGA. Residues 20 to 27 constitute a propeptide that is removed on maturation; that stretch reads SDIPPQPL. 7 disulfides stabilise this stretch: Cys-38-Cys-99, Cys-54-Cys-144, Cys-56-Cys-72, Cys-71-Cys-127, Cys-78-Cys-120, Cys-88-Cys-113, and Cys-106-Cys-118. Ca(2+) is bound by residues Tyr-55, Gly-57, and Gly-59. The active site involves His-75. Asp-76 contributes to the Ca(2+) binding site. The active site involves Asp-121.

This sequence belongs to the phospholipase A2 family. Group I subfamily. D49 sub-subfamily. Ca(2+) serves as cofactor. As to expression, expressed by the venom gland.

Its subcellular location is the secreted. The catalysed reaction is a 1,2-diacyl-sn-glycero-3-phosphocholine + H2O = a 1-acyl-sn-glycero-3-phosphocholine + a fatty acid + H(+). In terms of biological role, snake venom phospholipase A2 (PLA2) that inhibits collagen-induced platelet aggregation. PLA2 catalyzes the calcium-dependent hydrolysis of the 2-acyl groups in 3-sn-phosphoglycerides. In Austrelaps superbus (Lowland copperhead snake), this protein is Basic phospholipase A2 S6-45.